Here is a 93-residue protein sequence, read N- to C-terminus: Large ribosomal subunit protein eL42 (93 aa).

Positions 11, 14, 71, and 74 each coordinate Zn(2+). The C4-type zinc-finger motif lies at 11-74 (CRYCGKHTLH…VNIRFRCTEC (64 aa)).

The protein belongs to the eukaryotic ribosomal protein eL42 family. In terms of assembly, part of the 50S ribosomal subunit. It depends on Zn(2+) as a cofactor.

Its function is as follows. Binds to the 23S rRNA. The chain is Large ribosomal subunit protein eL42 from Archaeoglobus fulgidus (strain ATCC 49558 / DSM 4304 / JCM 9628 / NBRC 100126 / VC-16).